Consider the following 205-residue polypeptide: uncharacterized protein (205 aa).

Residues 51–189 (ANVDAVAILA…KKGFAIDVRL (139 aa)) form the Nudix hydrolase domain. A Nudix box motif is present at residues 90–111 (GLVDSKESCEDAAIRELREETG).

It belongs to the Nudix hydrolase family.

It is found in the cytoplasm. Its subcellular location is the nucleus. This is an uncharacterized protein from Schizosaccharomyces pombe (strain 972 / ATCC 24843) (Fission yeast).